The following is a 604-amino-acid chain: Linalool synthase Tps-5073L4, chloroplastic (604 aa).

The N-terminal 36 residues, 1-36, are a transit peptide targeting the chloroplast; sequence MSSMRIYVAIMKKPSVKHVDYVDKKASKPSWRVSSS. Residues Arg323, Asp360, Asp364, Arg501, and Asp504 each contribute to the (2E)-geranyl diphosphate site. Residues Asp360 and Asp364 each coordinate Mg(2+). Residues 360-364 carry the DDXXD motif motif; the sequence is DDVYD. 3 residues coordinate Mg(2+): Asp504, Thr508, and Glu512.

The protein belongs to the terpene synthase family. Tpsb subfamily. In terms of assembly, monomer. It depends on Mg(2+) as a cofactor. The cofactor is Mn(2+).

It localises to the plastid. The protein localises to the chloroplast. It carries out the reaction (2E)-geranyl diphosphate + H2O = linalool + diphosphate. It functions in the pathway secondary metabolite biosynthesis; terpenoid biosynthesis. In terms of biological role, monoterpene synthase (mono-TPS) involved in the biosynthesis of monoterpenes natural products. Catalyzes the conversion of (2E)-geranyl diphosphate (GPP) into linalool. The polypeptide is Linalool synthase Tps-5073L4, chloroplastic (Perilla frutescens (Beefsteak mint)).